Reading from the N-terminus, the 443-residue chain is MSEMTPREIVSELDKHIIGQDKAKRAVAIALRNRWRRMQLDETLRYEVTPKNILMIGPTGVGKTEIARRLAKLANAPFIKVEATKFTEVGYVGKEVDSIIRDLTDAAVKMVRLQSIEQNRYRAEELAEERILDVLIPPAKNNWGQTETQVEPSAARQAFRKKLREGQLDDKEIEIDVATTPVGVEIMAPPGMEEMTNQLQSMFQNLAGQKHKSRKLKIKDAFKLLIEEEASKLVNPEELKQQAIDSVEQHGIVFIDEIDKICKRGQTSGPDVSREGVQRDLLPLVEGCTVSTKHGMVKTDHILFIASGAFQVASPSDLIPELQGRLPIRVELQALTTKDFERILTEPSASLTEQYKALMETEGMIISFTDDGISKIAESAWQVNESTENIGARRLHTVLERLIEDISFEASERRGQSVDIDADYVKKHLDELVADEDLSRFIL.

ATP is bound by residues Ile18, 60-65, Asp256, Glu321, and Arg393; that span reads GVGKTE.

This sequence belongs to the ClpX chaperone family. HslU subfamily. A double ring-shaped homohexamer of HslV is capped on each side by a ring-shaped HslU homohexamer. The assembly of the HslU/HslV complex is dependent on binding of ATP.

It localises to the cytoplasm. Its function is as follows. ATPase subunit of a proteasome-like degradation complex; this subunit has chaperone activity. The binding of ATP and its subsequent hydrolysis by HslU are essential for unfolding of protein substrates subsequently hydrolyzed by HslV. HslU recognizes the N-terminal part of its protein substrates and unfolds these before they are guided to HslV for hydrolysis. The sequence is that of ATP-dependent protease ATPase subunit HslU from Photorhabdus laumondii subsp. laumondii (strain DSM 15139 / CIP 105565 / TT01) (Photorhabdus luminescens subsp. laumondii).